Here is a 438-residue protein sequence, read N- to C-terminus: MNKTPRVGFVSLGCPKAASDSEQILTRLRAEGYEIAPSYDGADLVVVNTCGFIDSAVEESLDAIGEALNENGKVIVTGCLGAKGDVVRDVHPSVLAVTGPHATEEVMSAVHTHLPKPHDPFVDLVPDIGVRLTPKHYAYLKISEGCNHRCTFCIIPSMRGDLESRPIHDVLREAESLAKAGVKEILVISQDTSAYGVDTKYKLGFHNGRPVKTRMTELCEELGRHGIWVRLHYVYPYPHVDEVIPLMRDGKILPYLDIPFQHASQKVLKLMKRPANSDNVLARIKKWREICPELVIRSTFIVGFPGETEEDFEELLAFIREAELDRVGCFTYSPVEGATANELPNPVPEDVKEARKERFMAVQAEISARRLERRVGQTLQVLVDEIDDEGTAVCRSYADAPEIDGLVFVEDAAGMQPGEFYQVEIVDCSEHDLWGERR.

One can recognise an MTTase N-terminal domain in the interval 5–115; sequence PRVGFVSLGC…VMSAVHTHLP (111 aa). [4Fe-4S] cluster contacts are provided by Cys14, Cys50, Cys79, Cys146, Cys150, and Cys153. The 238-residue stretch at 132–369 folds into the Radical SAM core domain; it reads LTPKHYAYLK…MAVQAEISAR (238 aa). Residues 372–438 enclose the TRAM domain; it reads ERRVGQTLQV…SEHDLWGERR (67 aa).

This sequence belongs to the methylthiotransferase family. RimO subfamily. [4Fe-4S] cluster is required as a cofactor.

The protein resides in the cytoplasm. It catalyses the reaction L-aspartate(89)-[ribosomal protein uS12]-hydrogen + (sulfur carrier)-SH + AH2 + 2 S-adenosyl-L-methionine = 3-methylsulfanyl-L-aspartate(89)-[ribosomal protein uS12]-hydrogen + (sulfur carrier)-H + 5'-deoxyadenosine + L-methionine + A + S-adenosyl-L-homocysteine + 2 H(+). Functionally, catalyzes the methylthiolation of an aspartic acid residue of ribosomal protein uS12. The chain is Ribosomal protein uS12 methylthiotransferase RimO from Chromobacterium violaceum (strain ATCC 12472 / DSM 30191 / JCM 1249 / CCUG 213 / NBRC 12614 / NCIMB 9131 / NCTC 9757 / MK).